The following is a 749-amino-acid chain: MYGSSRHHLDSFSSNDGNAFLVQVGSRTFEAHELQKLIPQLEEAISRKDAQLRQQQSIVEGHIKRISELEGEVTTLQRECDKLRSVLEQKAQSAASPGQPPSPSPRTDQLGNDLQQKAVFPADGTQQRAKKIAVSAEPTNFENKPATLQHYNKTVAAKQMIRDAVQKNDFLKQLAKEQIIELVNCMYEMRARAGQWVIQEGEPGDRLFVVAEGELQVSREGATLGKMRAGTVMGELAILYNCTRTASVQALTDVQLWVLDRSVFQMITQRLGMERHSQIINFLSKVSIFANLTEDRISKIADVMDQDYYDGGHYILRQGEKGDAFFVINSGQVKVTQQIEGEKEAREIRILNQGDFFGERALLGDEVRTANIIAQAPGVEVLTLDRESFTKLIGDLDTLRKDYGDKERVATLVREPPSPVKIVDDFREEFANVTLKNVKRLATLGVGGFGRVELVCVNGDKSKTYALKALKKKHIVDTRQQEHIFAERNIMMETSTDWIVKLYKTFRDQKFVYMLLEVCLGGELWTTLRDRGHFDDYTARFYVACVLEGLEYLHRKNIVYRDLKPENCLLANSGYLKLVDFGFAKKLASGRKTWTFCGTPEYVSPEIILNKGHDQAADYWALGIYICELMLGRPPFQASDPMKTYTLILKGVDALEIPNRRIGKTATALVKKLCRDNPGERLGSGSGGVNDIRKHRWFMGFDWEGLRTKTLKPPILPKVNNPADVTNFDNYPPDNDVPPDEFSGWDEGF.

Residues 30 to 96 are a coiled coil; sequence EAHELQKLIP…LEQKAQSAAS (67 aa). The disordered stretch occupies residues 87–111; the sequence is LEQKAQSAASPGQPPSPSPRTDQLG. Residues 234-237, 244-245, Arg349, 358-361, 368-369, and Tyr403 contribute to the 3',5'-cyclic GMP site; these read GELA, RT, and GERA. Positions 438-698 constitute a Protein kinase domain; sequence VKRLATLGVG…VNDIRKHRWF (261 aa). ATP-binding positions include 444 to 452 and Lys468; that span reads LGVGGFGRV. The short motif at 461–473 is the Nuclear localization signal element; sequence KSKTYALKALKKK. The active-site Proton acceptor is the Asp562. The region spanning 699–749 is the AGC-kinase C-terminal domain; that stretch reads MGFDWEGLRTKTLKPPILPKVNNPADVTNFDNYPPDNDVPPDEFSGWDEGF. A disordered region spans residues 723 to 749; it reads ADVTNFDNYPPDNDVPPDEFSGWDEGF.

Belongs to the protein kinase superfamily. AGC Ser/Thr protein kinase family. cGMP subfamily. Requires Mg(2+) as cofactor. Autophosphorylated.

It localises to the cytoplasm. It is found in the nucleus. It carries out the reaction L-seryl-[protein] + ATP = O-phospho-L-seryl-[protein] + ADP + H(+). The catalysed reaction is L-threonyl-[protein] + ATP = O-phospho-L-threonyl-[protein] + ADP + H(+). With respect to regulation, binding of cGMP results in enzyme activation. Functionally, promotes chemoreceptor gene expression in response to increased cGMP levels by antagonizing the gene repression functions of the class II HDAC hda-4 and the mef-2 transcription factor. Regulates gene expression via recruitment of a histone deacetylase complex containing hda-2, saeg-1 and saeg-2. Represses body size and lifespan through the dbl-1 and insulin pathways, respectively. May also signal through daf-3 and/or daf-5. Role in egg-laying, dauer formation and motility. Regulates behavioral responses to various chemosensory stimuli in sensory neurons. Required for the initiation of long term adaptation to prolonged odor exposure which results in a decrease in odor seeking behavior. May regulate this process by phosphorylating tax-2, a subunit of cyclic nucleotide-gated channel tax-2/tax-4. In ASH sensory neurons, negatively regulates avoidance behavior to some bitter tastants, such as quinine, probably by phosphorylating rgs-2 and rgs-3 which are 2 regulator of G-protein signaling proteins. In AWB sensory neurons, involved in avoidance behavior to some repellent odors. In ASE left (ASEL) sensory neuron, involved in the sensing of environmental alkalinity downstream of receptor-type guanylate cyclase gcy-14. In sensory neurons, involved in the signaling pathway downstream of insulin, TGF-beta and receptor-type guanylate cyclase responsible for inducing quiescence after food intake. Might play a role in aversive olfactory learning in AWC neurons when an odor is associated with food deprivation, depending on the ins-1/age-1 signal from the AIA to the AWC neurons. Probably by regulating neuronal transmission downstream of lin-3 and receptor lin-23 and phospholipase plc-3 in ALA neurons, involved in the decrease in locomotion during the quiescent state that precedes each larval molt. This chain is cGMP-dependent protein kinase egl-4, found in Caenorhabditis briggsae.